Reading from the N-terminus, the 362-residue chain is Thiol protease aleurain (362 aa).

Positions 1–22 (MAHARVLLLALAVLATAAVAVA) are cleaved as a signal peptide. The propeptide at 23–143 (SSSSFADSNP…GNHLMRDAAA (121 aa)) is activation peptide. 2 disulfides stabilise this stretch: C165/C208 and C199/C241. The active site involves C168. A glycan (N-linked (GlcNAc...) asparagine) is linked at N188. A glycan (N-linked (GlcNAc...) asparagine) is linked at N257. C299 and C349 are joined by a disulfide. Residues H308 and N328 contribute to the active site.

Belongs to the peptidase C1 family.

It is found in the vacuole. It carries out the reaction Hydrolysis of proteins, acting as an aminopeptidase (notably, cleaving Arg-|-Xaa bonds) as well as an endopeptidase.. Its function is as follows. May play a role in proteolysis leading to mobilization of nitrogen during senescence and starvation. The protein is Thiol protease aleurain of Hordeum vulgare (Barley).